We begin with the raw amino-acid sequence, 1088 residues long: Leucine-rich repeat receptor-like protein kinase PEPR2 (1088 aa).

A signal peptide spans Met-1–Ser-26. At Leu-27–Ala-739 the chain is on the extracellular side. 3 N-linked (GlcNAc...) asparagine glycosylation sites follow: Asn-55, Asn-82, and Asn-122. LRR repeat units lie at residues Gly-75 to Leu-99, Lys-100 to Asn-122, Cys-123 to Ser-146, Leu-147 to Gly-170, Ile-172 to Asn-194, Cys-195 to Leu-219, Asn-221 to Cys-243, Lys-244 to Cys-267, Ser-269 to Leu-291, Arg-292 to Cys-315, Ser-316 to Leu-339, Lys-341 to Ile-363, Ser-365 to Leu-387, Lys-388 to Asn-411, Arg-412 to Gly-435, Gln-436 to Cys-459, Lys-460 to Leu-485, Tyr-487 to Cys-506, Lys-507 to Asn-529, Leu-530 to Cys-554, Arg-556 to Ser-577, Trp-578 to Leu-602, Asp-603 to Lys-627, Leu-629 to Leu-651, Ile-652 to Ser-676, and Asn-678 to Asn-698. 9 N-linked (GlcNAc...) asparagine glycosylation sites follow: Asn-149, Asn-159, Asn-183, Asn-194, Asn-209, Asn-229, Asn-266, Asn-279, and Asn-314. 2 N-linked (GlcNAc...) asparagine glycosylation sites follow: Asn-373 and Asn-411. Asn-537 and Asn-568 each carry an N-linked (GlcNAc...) asparagine glycan. N-linked (GlcNAc...) asparagine glycosylation is found at Asn-658 and Asn-698. Residues Leu-740–Leu-760 form a helical membrane-spanning segment. The Cytoplasmic portion of the chain corresponds to Cys-761–His-1088. Thr-791 is modified (phosphothreonine). The region spanning Leu-794–Val-1080 is the Protein kinase domain. Residues Ile-800–Val-808 and Lys-822 each bind ATP. A phosphotyrosine mark is found at Tyr-868 and Tyr-908. The Proton acceptor role is filled by Asp-921. 2 positions are modified to phosphotyrosine: Tyr-962 and Tyr-969.

It belongs to the protein kinase superfamily. Ser/Thr protein kinase family. Interacts with BAK1. Interacts with CLE14.

It is found in the cell membrane. The catalysed reaction is L-seryl-[protein] + ATP = O-phospho-L-seryl-[protein] + ADP + H(+). It catalyses the reaction L-threonyl-[protein] + ATP = O-phospho-L-threonyl-[protein] + ADP + H(+). In terms of biological role, acts as a receptor for PEP defense peptides. Unlike typical immune receptors, senses an endogenous elicitor that potentiates PAMP-inducible plant responses. The chain is Leucine-rich repeat receptor-like protein kinase PEPR2 (PEPR2) from Arabidopsis thaliana (Mouse-ear cress).